Reading from the N-terminus, the 565-residue chain is Adenine deaminase 1 (565 aa).

It belongs to the metallo-dependent hydrolases superfamily. Adenine deaminase family. The cofactor is Mn(2+).

The enzyme catalyses adenine + H2O + H(+) = hypoxanthine + NH4(+). The sequence is that of Adenine deaminase 1 from Rhizobium meliloti (strain 1021) (Ensifer meliloti).